Here is an 863-residue protein sequence, read N- to C-terminus: Ubiquitin carboxyl-terminal hydrolase 13 (863 aa).

Ser114 is subject to Phosphoserine. Thr122 carries the post-translational modification Phosphothreonine. Residues 187 to 295 (PVSKYANNLT…KHLAHFGIDM (109 aa)) form a UBP-type; degenerate zinc finger. Residues Cys211, Cys214, Cys231, and His244 each coordinate Zn(2+). Lys311 participates in a covalent cross-link: Glycyl lysine isopeptide (Lys-Gly) (interchain with G-Cter in SUMO2). The region spanning 336–861 (TGLKNLGNSC…LGYMYFYRRI (526 aa)) is the USP domain. The active-site Nucleophile is the Cys345. Lys405 participates in a covalent cross-link: Glycyl lysine isopeptide (Lys-Gly) (interchain with G-Cter in SUMO2). 2 consecutive UBA domains span residues 652–693 (DIDE…IVVH) and 727–767 (QPPE…IFSH). His823 acts as the Proton acceptor in catalysis.

It belongs to the peptidase C19 family. In terms of assembly, interacts with UFD1. Interacts (via UBA domains) with SIAH2 (when ubiquitinated). Interacts with BAG6; the interaction is direct and may mediate UBL4A deubiquitination. Interacts (via UBA 2 domain) with AMFR; the interaction is direct. Interacts with UBL4A; may be indirect via BAG6. Interacts with NEDD4.

The protein localises to the cytoplasm. It catalyses the reaction Thiol-dependent hydrolysis of ester, thioester, amide, peptide and isopeptide bonds formed by the C-terminal Gly of ubiquitin (a 76-residue protein attached to proteins as an intracellular targeting signal).. With respect to regulation, specifically inhibited by spautin-1 (specific and potent autophagy inhibitor-1), a derivative of MBCQ that binds to USP13 and inhibits deubiquitinase activity. Regulated by PIK3C3/VPS34-containing complexes. The weak deubiquitinase activity in vitro suggests the existence of some mechanism that activates the enzyme. Deubiquitinase that mediates deubiquitination of target proteins such as BECN1, MITF, SKP2 and USP10 and is involved in various processes such as autophagy, endoplasmic reticulum-associated degradation (ERAD), cell cycle progression or DNA damage response. Component of a regulatory loop that controls autophagy and p53/TP53 levels: mediates deubiquitination of BECN1, a key regulator of autophagy, leading to stabilize the PIK3C3/VPS34-containing complexes. Alternatively, forms with NEDD4 a deubiquitination complex, which subsequently stabilizes VPS34 to promote autophagy. Also deubiquitinates USP10, an essential regulator of p53/TP53 stability. In turn, PIK3C3/VPS34-containing complexes regulate USP13 stability, suggesting the existence of a regulatory system by which PIK3C3/VPS34-containing complexes regulate p53/TP53 protein levels via USP10 and USP13. Recruited by nuclear UFD1 and mediates deubiquitination of SKP2, thereby regulating endoplasmic reticulum-associated degradation (ERAD). Also regulates ERAD through the deubiquitination of UBL4A a component of the BAG6/BAT3 complex. Mediates stabilization of SIAH2 independently of deubiquitinase activity: binds ubiquitinated SIAH2 and acts by impairing SIAH2 autoubiquitination. Regulates the cell cycle progression by stabilizing cell cycle proteins such as SKP2 and AURKB. In addition, plays an important role in maintaining genomic stability and in DNA replication checkpoint activation via regulation of RAP80 and TOPBP1. Deubiquitinates the multifunctional protein HMGB1 and subsequently drives its nucleocytoplasmic localization and its secretion. Positively regulates type I and type II interferon signalings by deubiquitinating STAT1 but negatively regulates antiviral response by deubiquitinating STING1. The sequence is that of Ubiquitin carboxyl-terminal hydrolase 13 (USP13) from Bos taurus (Bovine).